Here is an 853-residue protein sequence, read N- to C-terminus: Cytochrome P450 monooxygenase mpaDE' (853 aa).

The Lumenal portion of the chain corresponds to 1-6; it reads MESLSL. Residues 7-29 form a helical membrane-spanning segment; it reads TWITAIAVVLYLVQRYVRSYWRL. The Cytoplasmic portion of the chain corresponds to 30 to 853; it reads KDIPGPVLAK…DIENAIEGQK (824 aa). Cys449 serves as a coordination point for heme.

This sequence belongs to the cytochrome P450 family. Heme is required as a cofactor.

The protein localises to the endoplasmic reticulum membrane. The catalysed reaction is 5-methylorsellinate + reduced [NADPH--hemoprotein reductase] + O2 = 4,6-dihydroxy-2-(hydroxymethyl)-3-methylbenzoate + oxidized [NADPH--hemoprotein reductase] + H2O + H(+). It carries out the reaction 4,6-dihydroxy-2-(hydroxymethyl)-3-methylbenzoate + H(+) = 5,7-dihydroxy-4-methylphthalide + H2O. Its pathway is secondary metabolite biosynthesis; terpenoid biosynthesis. Its function is as follows. Cytochrome P450 monooxygenase; part of the gene cluster that mediates the biosynthesis of mycophenolic acid (MPA), the first isolated antibiotic natural product in the world obtained from a culture of Penicillium brevicompactum in 1893. MpaDE' is an endoplasmic reticulum-bound enzyme that catalyzes the conversion of 5-methylorsellinic acid (5MOA) into the phthalide compound 5,7-dihydroxy-4,6-dimethylphthalide (DHMP). MpaDE' first catalyzes hydroxylation of 5-MOA to 4,6-dihydroxy-2-(hydroxymethyl)-3-methylbenzoic acid (DHMB), and then acts as a lactone synthase that catalyzes the ring closure to convert DHMB into DHMP. The first step of the pathway is the synthesis of 5-methylorsellinic acid (5MOA) by the cytosolic polyketide synthase mpaC. 5MOA is then converted to the phthalide compound 5,7-dihydroxy-4,6-dimethylphthalide (DHMP) by the endoplasmic reticulum-bound cytochrome P450 monooxygenase mpaDE. MpaDE first catalyzes hydroxylation of 5-MOA to 4,6-dihydroxy-2-(hydroxymethyl)-3-methylbenzoic acid (DHMB). MpaDE then acts as a lactone synthase that catalyzes the ring closure to convert DHMB into DHMP. The next step is the prenylation of DHMP by the Golgi apparatus-associated prenyltransferase mpaA to yield farnesyl-DHMP (FDHMP). The ER-bound oxygenase mpaB then mediates the oxidative cleavage the C19-C20 double bond in FDHMP to yield FDHMP-3C via a mycophenolic aldehyde intermediate. The O-methyltransferase mpaG catalyzes the methylation of FDHMP-3C to yield MFDHMP-3C. After the cytosolic methylation of FDHMP-3C, MFDHMP-3C enters into peroxisomes probably via free diffusion due to its low molecular weight. Upon a peroxisomal CoA ligation reaction, catalyzed by a beta-oxidation component enzyme acyl-CoA ligase ACL891, MFDHMP-3C-CoA would then be restricted to peroxisomes for the following beta-oxidation pathway steps. The peroxisomal beta-oxidation machinery than converts MFDHMP-3C-CoA into MPA_CoA, via a beta-oxidation chain-shortening process. Finally mpaH acts as a peroxisomal acyl-CoA hydrolase with high substrate specificity toward MPA-CoA to release the final product MPA. This is Cytochrome P450 monooxygenase mpaDE' from Penicillium brevicompactum.